A 291-amino-acid polypeptide reads, in one-letter code: MKRILLFVLTNVAVVAVLGIVASLLGVNRYLTASGLDLGSLLGFALVIGFGGAIISLLISKPMAKWTTGVRIISQPQNVDEAWIVETVRKLADTAGIGMPEVGIFDGAPNAFATGAFKNSALVAVSTGLLQGMTREEIEAVIGHEVAHVANGDMVTMALIQGVMNTFVVFLSRVIAFAIDGFLRKGDERSSGPGIGYMITTVVLDIVLGFAAAIVVAWFSRHREFRADAGAAKLMNRKQPMINALARLGGMTPGELPKSMAAMGIAGGIGKLFSTHPPIEERIAALQNAPL.

A run of 2 helical transmembrane segments spans residues 4–24 and 39–59; these read ILLF…VASL and GSLL…SLLI. Residue His144 coordinates Zn(2+). The active site involves Glu145. Residue His148 coordinates Zn(2+). The next 2 helical transmembrane spans lie at 159 to 179 and 199 to 219; these read LIQG…AFAI and ITTV…VAWF. Glu224 is a Zn(2+) binding site.

Belongs to the peptidase M48B family. Requires Zn(2+) as cofactor.

It is found in the cell inner membrane. The protein is Protease HtpX homolog of Albidiferax ferrireducens (strain ATCC BAA-621 / DSM 15236 / T118) (Rhodoferax ferrireducens).